The chain runs to 109 residues: Nucleoid-associated protein Swoo_1794 (109 aa).

Residues 88–109 (QKDKMAEVTGGMQLPPGMKMPF) form a disordered region.

It belongs to the YbaB/EbfC family. Homodimer.

The protein resides in the cytoplasm. Its subcellular location is the nucleoid. Its function is as follows. Binds to DNA and alters its conformation. May be involved in regulation of gene expression, nucleoid organization and DNA protection. In Shewanella woodyi (strain ATCC 51908 / MS32), this protein is Nucleoid-associated protein Swoo_1794.